Reading from the N-terminus, the 272-residue chain is tRNA pseudouridine synthase B (272 aa).

Residue aspartate 38 is the Nucleophile of the active site.

The protein belongs to the pseudouridine synthase TruB family. Type 1 subfamily.

It carries out the reaction uridine(55) in tRNA = pseudouridine(55) in tRNA. Responsible for synthesis of pseudouridine from uracil-55 in the psi GC loop of transfer RNAs. This is tRNA pseudouridine synthase B from Campylobacter jejuni subsp. jejuni serotype O:2 (strain ATCC 700819 / NCTC 11168).